A 317-amino-acid chain; its full sequence is SWI/SNF-related matrix-associated actin-dependent regulator of chromatin subfamily E member 1-related (317 aa).

Low complexity predominate over residues 1-22; sequence MSHGPKQPGAASAPASGKAPGQ. Residues 1 to 71 form a disordered region; it reads MSHGPKQPGA…RKKILPNGPK (71 aa). Residue lysine 31 forms a Glycyl lysine isopeptide (Lys-Gly) (interchain with G-Cter in SUMO2) linkage. Positions 31-52 are enriched in basic and acidic residues; it reads KQERGEGPRAGEKGSHEEEPVK. Residues 53-65 show a composition bias toward basic residues; sequence KRGWPKGKKRKKI. Residues 70–138 constitute a DNA-binding region (HMG box); the sequence is PKAPVTGYVR…QYMKELRAYQ (69 aa). Serine 160 carries the post-translational modification Phosphoserine. Residues 190-257 are a coiled coil; that stretch reads EEFLDQNKAR…LQQQLQAVRQ (68 aa).

As to quaternary structure, component of a BHC histone deacetylase complex that contains HDAC1, HDAC2, HMG20B/BRAF35, KDM1A, RCOR1/CoREST and PHF21A/BHC80. The BHC complex may also contain ZMYM2, ZNF217, ZMYM3, GSE1 and GTF2I. Interacts with the BRCA2 tumor suppressor protein.

It is found in the nucleus. The protein resides in the chromosome. Its function is as follows. Required for correct progression through G2 phase of the cell cycle and entry into mitosis. Required for RCOR1/CoREST mediated repression of neuronal specific gene promoters. The protein is SWI/SNF-related matrix-associated actin-dependent regulator of chromatin subfamily E member 1-related (HMG20B) of Bos taurus (Bovine).